The sequence spans 114 residues: Large ribosomal subunit protein uL22 (114 aa).

It belongs to the universal ribosomal protein uL22 family. In terms of assembly, part of the 50S ribosomal subunit.

Its function is as follows. This protein binds specifically to 23S rRNA; its binding is stimulated by other ribosomal proteins, e.g. L4, L17, and L20. It is important during the early stages of 50S assembly. It makes multiple contacts with different domains of the 23S rRNA in the assembled 50S subunit and ribosome. The globular domain of the protein is located near the polypeptide exit tunnel on the outside of the subunit, while an extended beta-hairpin is found that lines the wall of the exit tunnel in the center of the 70S ribosome. In Streptococcus uberis (strain ATCC BAA-854 / 0140J), this protein is Large ribosomal subunit protein uL22.